The primary structure comprises 212 residues: Pyrrolidone-carboxylate peptidase (212 aa).

Active-site residues include glutamate 80, cysteine 143, and histidine 165.

This sequence belongs to the peptidase C15 family. In terms of assembly, homotetramer.

It is found in the cytoplasm. The enzyme catalyses Release of an N-terminal pyroglutamyl group from a polypeptide, the second amino acid generally not being Pro.. In terms of biological role, removes 5-oxoproline from various penultimate amino acid residues except L-proline. The sequence is that of Pyrrolidone-carboxylate peptidase from Aliivibrio fischeri (strain MJ11) (Vibrio fischeri).